The following is a 328-amino-acid chain: uncharacterized protein (328 aa).

The segment at 296-328 is disordered; it reads APEGDLEDEIIEVDPEQPRDDPYRRLRTPPPGG. Over residues 299 to 310 the composition is skewed to acidic residues; that stretch reads GDLEDEIIEVDP.

Possibly necessary for replication. This is an uncharacterized protein from Halobacterium sp. (strain GN101).